The sequence spans 210 residues: Tumor protein D53 homolog (210 aa).

A coiled-coil region spans residues 22 to 73; it reads VTDVDFTSMISEEEKEELKAELAKLEDEISTLRQVLAAKEKHLIEIKQKLGM. A compositionally biased stretch (polar residues) spans 185 to 197; sequence SSTAHASAQSSLA. The segment at 185–210 is disordered; that stretch reads SSTAHASAQSSLAGTRLPESEEELQC.

Belongs to the TPD52 family. Forms a homodimer or heterodimer with other members of the family.

The chain is Tumor protein D53 homolog (TPD52L1) from Gallus gallus (Chicken).